Consider the following 226-residue polypeptide: ATP synthase F(0) complex subunit a (226 aa).

6 helical membrane-spanning segments follow: residues 13-33, 69-89, 97-117, 138-158, 179-199, and 201-221; these read VILGIPLIAIAMLDPFTLISW, WALLLTSLMLLLMSLNLLGLL, TQLSLNMGLAVPLWLATVIMA, IPVLIIIETISLFIRPLALGV, FVLLSIMPTVAILTSIVLFLL, and LLEIAVAMIQAYVFVLLLSLY.

This sequence belongs to the ATPase A chain family. As to quaternary structure, component of the ATP synthase complex composed at least of ATP5F1A/subunit alpha, ATP5F1B/subunit beta, ATP5MC1/subunit c (homooctomer), MT-ATP6/subunit a, MT-ATP8/subunit 8, ATP5ME/subunit e, ATP5MF/subunit f, ATP5MG/subunit g, ATP5MK/subunit k, ATP5MJ/subunit j, ATP5F1C/subunit gamma, ATP5F1D/subunit delta, ATP5F1E/subunit epsilon, ATP5PF/subunit F6, ATP5PB/subunit b, ATP5PD/subunit d, ATP5PO/subunit OSCP. ATP synthase complex consists of a soluble F(1) head domain (subunits alpha(3) and beta(3)) - the catalytic core - and a membrane F(0) domain - the membrane proton channel (subunits c, a, 8, e, f, g, k and j). These two domains are linked by a central stalk (subunits gamma, delta, and epsilon) rotating inside the F1 region and a stationary peripheral stalk (subunits F6, b, d, and OSCP). Interacts with DNAJC30; interaction is direct.

Its subcellular location is the mitochondrion inner membrane. It carries out the reaction H(+)(in) = H(+)(out). In terms of biological role, subunit a, of the mitochondrial membrane ATP synthase complex (F(1)F(0) ATP synthase or Complex V) that produces ATP from ADP in the presence of a proton gradient across the membrane which is generated by electron transport complexes of the respiratory chain. ATP synthase complex consist of a soluble F(1) head domain - the catalytic core - and a membrane F(1) domain - the membrane proton channel. These two domains are linked by a central stalk rotating inside the F(1) region and a stationary peripheral stalk. During catalysis, ATP synthesis in the catalytic domain of F(1) is coupled via a rotary mechanism of the central stalk subunits to proton translocation. With the subunit c (ATP5MC1), forms the proton-conducting channel in the F(0) domain, that contains two crucial half-channels (inlet and outlet) that facilitate proton movement from the mitochondrial intermembrane space (IMS) into the matrix. Protons are taken up via the inlet half-channel and released through the outlet half-channel, following a Grotthuss mechanism. The chain is ATP synthase F(0) complex subunit a from Xenopus laevis (African clawed frog).